Consider the following 422-residue polypeptide: Phosphoribosylamine--glycine ligase (422 aa).

The ATP-grasp domain maps to 107-312 (KDVMAAAGVR…LGQLLHAAAT (206 aa)). 137-193 (GPPAGDPAWVVKDDRLAAGKGVVVTADRDVARAHGAALLEAGHPVLLESYLDGPEVS) is a binding site for ATP. Mg(2+)-binding residues include E282 and N284.

The protein belongs to the GARS family. Mg(2+) serves as cofactor. The cofactor is Mn(2+).

The enzyme catalyses 5-phospho-beta-D-ribosylamine + glycine + ATP = N(1)-(5-phospho-beta-D-ribosyl)glycinamide + ADP + phosphate + H(+). It participates in purine metabolism; IMP biosynthesis via de novo pathway; N(1)-(5-phospho-D-ribosyl)glycinamide from 5-phospho-alpha-D-ribose 1-diphosphate: step 2/2. This is Phosphoribosylamine--glycine ligase from Mycobacterium bovis (strain ATCC BAA-935 / AF2122/97).